We begin with the raw amino-acid sequence, 123 residues long: Probable non-functional immunoglobulin lambda variable 11-55 (123 aa).

An N-terminal signal peptide occupies residues 1 to 19 (MALTPLLLLLLSHCTGSLS). Residues 20–44 (RPVLTQPPSLSASPGATARLPCTLS) form a framework-1 region. One can recognise an Ig-like domain in the interval 21 to 123 (PVLTQPPSLS…YCQVYESSAN (103 aa)). Cysteines 41 and 115 form a disulfide. The segment at 45-53 (SDLSVGGKN) is complementarity-determining-1. The interval 54 to 70 (MFWYQQKLGSSPRLFLY) is framework-2. The complementarity-determining-2 stretch occupies residues 71 to 77 (HYSDSDK). The interval 78-115 (QLGPGVPSRVSGSKETSSNTAFLLISGLQPEDEADYYC) is framework-3. Positions 116–123 (QVYESSAN) are complementarity-determining-3.

Immunoglobulins are composed of two identical heavy chains and two identical light chains; disulfide-linked.

The protein resides in the secreted. Its subcellular location is the cell membrane. Probable non-functional open reading frame (ORF) of V region of the variable domain of immunoglobulin light chains. Non-functional ORF generally cannot participate in the synthesis of a productive immunoglobulin chain due to altered V-(D)-J or switch recombination and/or splicing site (at mRNA level) and/or conserved amino acid change (protein level). Immunoglobulins, also known as antibodies, are membrane-bound or secreted glycoproteins produced by B lymphocytes. In the recognition phase of humoral immunity, the membrane-bound immunoglobulins serve as receptors which, upon binding of a specific antigen, trigger the clonal expansion and differentiation of B lymphocytes into immunoglobulins-secreting plasma cells. Secreted immunoglobulins mediate the effector phase of humoral immunity, which results in the elimination of bound antigens. The antigen binding site is formed by the variable domain of one heavy chain, together with that of its associated light chain. Thus, each immunoglobulin has two antigen binding sites with remarkable affinity for a particular antigen. The variable domains are assembled by a process called V-(D)-J rearrangement and can then be subjected to somatic hypermutations which, after exposure to antigen and selection, allow affinity maturation for a particular antigen. The chain is Probable non-functional immunoglobulin lambda variable 11-55 from Homo sapiens (Human).